We begin with the raw amino-acid sequence, 631 residues long: Dolichyl-diphosphooligosaccharide--protein glycosyltransferase subunit 2 (631 aa).

The first 22 residues, 1-22, serve as a signal peptide directing secretion; sequence MAPPGSSAVFLLALTITASVQA. Topologically, residues 23–540 are lumenal; that stretch reads LTPTHYLTKQ…REPEKRPPTV (518 aa). Asparagine 106 is a glycosylation site (N-linked (GlcNAc...) asparagine). A Glycyl lysine isopeptide (Lys-Gly) (interchain with G-Cter in ubiquitin) cross-link involves residue lysine 154. Residues 541–561 traverse the membrane as a helical segment; sequence VSNTFTALILSPLLLLFALWI. Topologically, residues 562–571 are cytoplasmic; that stretch reads RIGANVSNFT. The chain crosses the membrane as a helical span at residues 572–592; it reads FAPSTVIFHLGHAAMLGLMYI. At 593 to 596 the chain is on the lumenal side; sequence YWTQ. A helical membrane pass occupies residues 597–617; it reads LNMFQTLKYLAVLGTVTFLAG. At 618–631 the chain is on the cytoplasmic side; that stretch reads NRMLAQHAVKRTAH.

Belongs to the SWP1 family. As to quaternary structure, component of the oligosaccharyltransferase (OST) complex. OST exists in two different complex forms which contain common core subunits RPN1, RPN2, OST48, OST4, DAD1 and TMEM258, either STT3A or STT3B as catalytic subunits, and form-specific accessory subunits. STT3A complex assembly occurs through the formation of 3 subcomplexes. Subcomplex 1 contains RPN1 and TMEM258, subcomplex 2 contains the STT3A-specific subunits STT3A, DC2/OSTC, and KCP2 as well as the core subunit OST4, and subcomplex 3 contains RPN2, DAD1, and OST48. The STT3A complex can form stable complexes with the Sec61 complex or with both the Sec61 and TRAP complexes. Interacts with DDI2. Interacts with TMEM35A/NACHO.

It is found in the endoplasmic reticulum. The protein localises to the endoplasmic reticulum membrane. It functions in the pathway protein modification; protein glycosylation. Functionally, subunit of the oligosaccharyl transferase (OST) complex that catalyzes the initial transfer of a defined glycan (Glc(3)Man(9)GlcNAc(2) in eukaryotes) from the lipid carrier dolichol-pyrophosphate to an asparagine residue within an Asn-X-Ser/Thr consensus motif in nascent polypeptide chains, the first step in protein N-glycosylation. N-glycosylation occurs cotranslationally and the complex associates with the Sec61 complex at the channel-forming translocon complex that mediates protein translocation across the endoplasmic reticulum (ER). All subunits are required for a maximal enzyme activity. This Mus musculus (Mouse) protein is Dolichyl-diphosphooligosaccharide--protein glycosyltransferase subunit 2.